We begin with the raw amino-acid sequence, 125 residues long: Small ribosomal subunit protein eS6 (125 aa).

It belongs to the eukaryotic ribosomal protein eS6 family. Part of the 30S ribosomal subunit.

The protein is Small ribosomal subunit protein eS6 of Thermococcus kodakarensis (strain ATCC BAA-918 / JCM 12380 / KOD1) (Pyrococcus kodakaraensis (strain KOD1)).